The sequence spans 190 residues: Ribosome hibernation promotion factor (190 aa).

It belongs to the HPF/YfiA ribosome-associated protein family. Long HPF subfamily. Interacts with 100S ribosomes.

It localises to the cytoplasm. Its function is as follows. Required for dimerization of active 70S ribosomes into 100S ribosomes in stationary phase; 100S ribosomes are translationally inactive and sometimes present during exponential growth. The protein is Ribosome hibernation promotion factor of Rhizobium meliloti (strain 1021) (Ensifer meliloti).